The sequence spans 505 residues: Catalase (505 aa).

Residues histidine 56 and asparagine 129 contribute to the active site. Heme is bound at residue tyrosine 339.

It belongs to the catalase family. Heme is required as a cofactor.

Its subcellular location is the cytoplasm. The enzyme catalyses 2 H2O2 = O2 + 2 H2O. Its function is as follows. Decomposes hydrogen peroxide into water and oxygen; serves to protect cells from the toxic effects of hydrogen peroxide. The sequence is that of Catalase (katA) from Helicobacter pylori (strain J99 / ATCC 700824) (Campylobacter pylori J99).